Here is a 338-residue protein sequence, read N- to C-terminus: Ketol-acid reductoisomerase (NADP(+)) (338 aa).

The region spanning 1–181 (MKVYYDKDAD…GGGRTGIIET (181 aa)) is the KARI N-terminal Rossmann domain. Residues 24-27 (YGSQ), arginine 47, serine 50, serine 52, and 82-85 (DEFQ) each bind NADP(+). Residue histidine 107 is part of the active site. Residue glycine 133 coordinates NADP(+). The KARI C-terminal knotted domain occupies 182-327 (TFKDETETDL…AKLRSMMPWI (146 aa)). Residues aspartate 190, glutamate 194, glutamate 226, and glutamate 230 each coordinate Mg(2+). Serine 251 contacts substrate.

Belongs to the ketol-acid reductoisomerase family. It depends on Mg(2+) as a cofactor.

The catalysed reaction is (2R)-2,3-dihydroxy-3-methylbutanoate + NADP(+) = (2S)-2-acetolactate + NADPH + H(+). It catalyses the reaction (2R,3R)-2,3-dihydroxy-3-methylpentanoate + NADP(+) = (S)-2-ethyl-2-hydroxy-3-oxobutanoate + NADPH + H(+). The protein operates within amino-acid biosynthesis; L-isoleucine biosynthesis; L-isoleucine from 2-oxobutanoate: step 2/4. It participates in amino-acid biosynthesis; L-valine biosynthesis; L-valine from pyruvate: step 2/4. Involved in the biosynthesis of branched-chain amino acids (BCAA). Catalyzes an alkyl-migration followed by a ketol-acid reduction of (S)-2-acetolactate (S2AL) to yield (R)-2,3-dihydroxy-isovalerate. In the isomerase reaction, S2AL is rearranged via a Mg-dependent methyl migration to produce 3-hydroxy-3-methyl-2-ketobutyrate (HMKB). In the reductase reaction, this 2-ketoacid undergoes a metal-dependent reduction by NADPH to yield (R)-2,3-dihydroxy-isovalerate. The polypeptide is Ketol-acid reductoisomerase (NADP(+)) (Thiobacillus denitrificans (strain ATCC 25259 / T1)).